Consider the following 358-residue polypeptide: Alanine racemase (358 aa).

Lysine 35 serves as the catalytic Proton acceptor; specific for D-alanine. An N6-(pyridoxal phosphate)lysine modification is found at lysine 35. Substrate is bound at residue arginine 130. The Proton acceptor; specific for L-alanine role is filled by tyrosine 255. Residue methionine 303 coordinates substrate.

Belongs to the alanine racemase family. It depends on pyridoxal 5'-phosphate as a cofactor.

The enzyme catalyses L-alanine = D-alanine. It participates in amino-acid biosynthesis; D-alanine biosynthesis; D-alanine from L-alanine: step 1/1. Its function is as follows. Catalyzes the interconversion of L-alanine and D-alanine. May also act on other amino acids. The polypeptide is Alanine racemase (alr) (Shewanella piezotolerans (strain WP3 / JCM 13877)).